Consider the following 967-residue polypeptide: Isoleucine--tRNA ligase 2 (967 aa).

The 'HIGH' region motif lies at 58 to 68 (PYANGDIHIGH). The segment covering 437-446 (AVTEEAGATG) has biased composition (low complexity). Positions 437-466 (AVTEEAGATGEARKVGKAEEAEEAGPAKTL) are disordered. An L-isoleucyl-5'-AMP-binding site is contributed by E598. The 'KMSKS' region signature appears at 639–643 (KMSKS). K642 is an ATP binding site. Positions 922, 925, 942, and 945 each coordinate Zn(2+).

This sequence belongs to the class-I aminoacyl-tRNA synthetase family. IleS type 1 subfamily. Monomer. Zn(2+) serves as cofactor.

Its subcellular location is the cytoplasm. The catalysed reaction is tRNA(Ile) + L-isoleucine + ATP = L-isoleucyl-tRNA(Ile) + AMP + diphosphate. Its function is as follows. Catalyzes the attachment of isoleucine to tRNA(Ile). As IleRS can inadvertently accommodate and process structurally similar amino acids such as valine, to avoid such errors it has two additional distinct tRNA(Ile)-dependent editing activities. One activity is designated as 'pretransfer' editing and involves the hydrolysis of activated Val-AMP. The other activity is designated 'posttransfer' editing and involves deacylation of mischarged Val-tRNA(Ile). In Burkholderia mallei (strain ATCC 23344), this protein is Isoleucine--tRNA ligase 2.